The primary structure comprises 392 residues: Putative RNA-binding protein Luc7-like 2 (392 aa).

Residue S18 is modified to Phosphoserine. Positions 102–177 form a coiled coil; the sequence is EVSKKRLAET…EAEEVYRNSM (76 aa). The segment covering 235–257 has biased composition (basic and acidic residues); sequence KQEKRNQERLKRREEREREEREK. Residues 235 to 392 form a disordered region; sequence KQEKRNQERL…SSEEREAGEI (158 aa). A compositionally biased stretch (basic residues) spans 258–321; that stretch reads LRRSRSHSKN…RSRSHQRSRH (64 aa). Residues K266 and K269 each carry the 5-hydroxylysine; by JMJD6 modification. Composition is skewed to basic and acidic residues over residues 337 to 364 and 377 to 392; these read KERFRDQDLASRDRDRSSRDRSPRDRDR and RSEDRRSSEEREAGEI.

This sequence belongs to the Luc7 family. As to quaternary structure, interacts with SCNM1. All isoforms are expressed in brain, kidney, heart, thymus, stomach, skeletal muscle, testis and spinal cord.

It localises to the nucleus speckle. The protein localises to the nucleus. The protein resides in the nucleoplasm. In terms of biological role, may bind to RNA via its Arg/Ser-rich domain. The sequence is that of Putative RNA-binding protein Luc7-like 2 (Luc7l2) from Mus musculus (Mouse).